An 84-amino-acid chain; its full sequence is uncharacterized protein (84 aa).

This is an uncharacterized protein from Bacillus subtilis (strain 168).